We begin with the raw amino-acid sequence, 147 residues long: Protein archease (147 aa).

D17, D146, and I147 together coordinate Ca(2+).

Belongs to the archease family.

In terms of biological role, activates the tRNA-splicing ligase complex by facilitating the enzymatic turnover of catalytic subunit RtcB. Acts by promoting the guanylylation of RtcB, a key intermediate step in tRNA ligation. Can also alter the NTP specificity of RtcB such that ATP, dGTP or ITP is used efficiently. This Pyrobaculum neutrophilum (strain DSM 2338 / JCM 9278 / NBRC 100436 / V24Sta) (Thermoproteus neutrophilus) protein is Protein archease.